Reading from the N-terminus, the 308-residue chain is UDP-N-acetylenolpyruvoylglucosamine reductase (308 aa).

An FAD-binding PCMH-type domain is found at 24 to 187 (RVGGPADWLF…VSASLQGVPG (164 aa)). Arg-167 is a catalytic residue. The interval 199–230 (QLDKRDQTQPTKERSAGSTFRNPAGFSSTGRA) is disordered. Residues 200 to 213 (LDKRDQTQPTKERS) are compositionally biased toward basic and acidic residues. The span at 214-228 (AGSTFRNPAGFSSTG) shows a compositional bias: polar residues. Catalysis depends on Ser-216, which acts as the Proton donor. Residue Glu-298 is part of the active site.

The protein belongs to the MurB family. FAD is required as a cofactor.

It localises to the cytoplasm. The catalysed reaction is UDP-N-acetyl-alpha-D-muramate + NADP(+) = UDP-N-acetyl-3-O-(1-carboxyvinyl)-alpha-D-glucosamine + NADPH + H(+). It functions in the pathway cell wall biogenesis; peptidoglycan biosynthesis. Its function is as follows. Cell wall formation. This is UDP-N-acetylenolpyruvoylglucosamine reductase from Ruegeria pomeroyi (strain ATCC 700808 / DSM 15171 / DSS-3) (Silicibacter pomeroyi).